We begin with the raw amino-acid sequence, 226 residues long: PKHD-type hydroxylase Pfl01_0799 (226 aa).

The 101-residue stretch at 78 to 178 (KVFPPLLNCY…RYASFFWTQS (101 aa)) folds into the Fe2OG dioxygenase domain. Fe cation contacts are provided by H96, D98, and H159. R169 lines the 2-oxoglutarate pocket.

The cofactor is Fe(2+). L-ascorbate serves as cofactor.

The protein is PKHD-type hydroxylase Pfl01_0799 of Pseudomonas fluorescens (strain Pf0-1).